The sequence spans 356 residues: Histidinol-phosphate aminotransferase (356 aa).

K214 is subject to N6-(pyridoxal phosphate)lysine.

Belongs to the class-II pyridoxal-phosphate-dependent aminotransferase family. Histidinol-phosphate aminotransferase subfamily. In terms of assembly, homodimer. It depends on pyridoxal 5'-phosphate as a cofactor.

It carries out the reaction L-histidinol phosphate + 2-oxoglutarate = 3-(imidazol-4-yl)-2-oxopropyl phosphate + L-glutamate. It functions in the pathway amino-acid biosynthesis; L-histidine biosynthesis; L-histidine from 5-phospho-alpha-D-ribose 1-diphosphate: step 7/9. The chain is Histidinol-phosphate aminotransferase from Shigella boydii serotype 18 (strain CDC 3083-94 / BS512).